The primary structure comprises 331 residues: Transmembrane protein 59-like (331 aa).

The signal sequence occupies residues 1-21 (MAAVALPLLLLLASPATPTPA). Residues 15–62 (PATPTPARDPFSPQLGDTQRCQQRCRQRHPGLPPAQPEPEGPSESPNN) are disordered. Over residues 45–54 (GLPPAQPEPE) the composition is skewed to pro residues. N90 carries an N-linked (GlcNAc...) asparagine glycan. The helical transmembrane segment at 258–278 (VLFCCLFLSVLIILWLSCCTL) threads the bilayer. A Microbody targeting signal motif is present at residues 329 to 331 (TTL).

This sequence belongs to the TMEM59 family.

Its subcellular location is the golgi apparatus membrane. Its function is as follows. Modulates the O-glycosylation and complex N-glycosylation steps occurring during the Golgi maturation of APP. Inhibits APP transport to the cell surface and further shedding. This chain is Transmembrane protein 59-like (Tmem59l), found in Rattus norvegicus (Rat).